A 93-amino-acid polypeptide reads, in one-letter code: N-myc protein (93 aa).

Efficient DNA binding requires dimerization with another bHLH protein. Binds DNA as a heterodimer with MAX. In terms of tissue distribution, barely detectable in most tissues assayed.

The protein localises to the nucleus. Its function is as follows. May function as a transcription factor. The chain is N-myc protein (mycn) from Danio rerio (Zebrafish).